A 191-amino-acid polypeptide reads, in one-letter code: IMP cyclohydrolase (191 aa).

It belongs to the archaeal IMP cyclohydrolase family.

The catalysed reaction is IMP + H2O = 5-formamido-1-(5-phospho-D-ribosyl)imidazole-4-carboxamide. The protein operates within purine metabolism; IMP biosynthesis via de novo pathway; IMP from 5-formamido-1-(5-phospho-D-ribosyl)imidazole-4-carboxamide: step 1/1. Functionally, catalyzes the cyclization of 5-formylamidoimidazole-4-carboxamide ribonucleotide to IMP. The chain is IMP cyclohydrolase from Natronomonas pharaonis (strain ATCC 35678 / DSM 2160 / CIP 103997 / JCM 8858 / NBRC 14720 / NCIMB 2260 / Gabara) (Halobacterium pharaonis).